Here is a 425-residue protein sequence, read N- to C-terminus: Serine--tRNA ligase (425 aa).

226-228 serves as a coordination point for L-serine; the sequence is TSE. ATP contacts are provided by residues 257-259 and valine 273; that span reads RRE. Glutamate 280 is an L-serine binding site. Residue 344 to 347 coordinates ATP; sequence ELTS. Threonine 382 contacts L-serine.

This sequence belongs to the class-II aminoacyl-tRNA synthetase family. Type-1 seryl-tRNA synthetase subfamily. In terms of assembly, homodimer. The tRNA molecule binds across the dimer.

It is found in the cytoplasm. It catalyses the reaction tRNA(Ser) + L-serine + ATP = L-seryl-tRNA(Ser) + AMP + diphosphate + H(+). It carries out the reaction tRNA(Sec) + L-serine + ATP = L-seryl-tRNA(Sec) + AMP + diphosphate + H(+). It participates in aminoacyl-tRNA biosynthesis; selenocysteinyl-tRNA(Sec) biosynthesis; L-seryl-tRNA(Sec) from L-serine and tRNA(Sec): step 1/1. Its function is as follows. Catalyzes the attachment of serine to tRNA(Ser). Is also able to aminoacylate tRNA(Sec) with serine, to form the misacylated tRNA L-seryl-tRNA(Sec), which will be further converted into selenocysteinyl-tRNA(Sec). This chain is Serine--tRNA ligase, found in Mycobacterium avium (strain 104).